The following is a 129-amino-acid chain: uncharacterized protein (129 aa).

Residues 86-96 (NDGFSSDDEPE) show a composition bias toward acidic residues. Residues 86-116 (NDGFSSDDEPEEHVILTEDNQGEPSETPQAT) form a disordered region. The span at 103–116 (EDNQGEPSETPQAT) shows a compositional bias: polar residues.

This sequence belongs to the asfivirus D129L family.

This is an uncharacterized protein from African swine fever virus (strain Badajoz 1971 Vero-adapted) (Ba71V).